A 453-amino-acid polypeptide reads, in one-letter code: Serine incorporator 1 (453 aa).

The N-myristoyl glycine moiety is linked to residue Gly-2. Residues 2–39 (GSVLGLCSMASWIPCLCGSAPCLLCRCCPSGNNSTVTR) lie on the Cytoplasmic side of the membrane. The chain crosses the membrane as a helical span at residues 40–60 (LIYALFLLVGVCVACVMLIPG). Residues 61–88 (MEEQLNKIPGFCENEKGMVPCNILVGYK) are Lumenal-facing. The helical transmembrane segment at 89–109 (AVYRLCFGLAMFYLLLSLLMI) threads the bilayer. The Cytoplasmic portion of the chain corresponds to 110-123 (KVKSSSDPRAAIHN). Residues 124–144 (GFWFFKFAAAIAIIIGAFFIP) form a helical membrane-spanning segment. Over 145-151 (EGTFTTV) the chain is Lumenal. The chain crosses the membrane as a helical span at residues 152–172 (WFYVGMAGAFCFILIQLVLLI). At 173–197 (DFAHSWNESWVEKMEEGNSRCWYAA) the chain is on the cytoplasmic side. Residues 198–218 (LLSATALNYLLSLVAVVLFFV) traverse the membrane as a helical segment. Residues 219 to 231 (YYTHPASCAENKA) lie on the Lumenal side of the membrane. The helical transmembrane segment at 232–252 (FISVNMLLCLGASIMSILPKI) threads the bilayer. The Cytoplasmic portion of the chain corresponds to 253–259 (QESQPRS). The chain crosses the membrane as a helical span at residues 260 to 280 (GLLQSSVITVYTMYLTWSAMT). Residues 281-309 (NEPETECNPSLLNIIGYNTTSTVSKEGQS) are Lumenal-facing. The helical transmembrane segment at 310 to 330 (VQWWHTQGIIGLILFLLCVFY) threads the bilayer. At 331–387 (SSIRTSNNSQVNKLTLTSDESTLIEDGGARNDGSLEDGDDVHRAVDNERDGVTYSYS) the chain is on the cytoplasmic side. Ser-351 bears the Phosphoserine mark. Thr-352 carries the phosphothreonine modification. Ser-364 carries the post-translational modification Phosphoserine. Residues 388–408 (FFHFMLFLASLYIMMTLTNWY) form a helical membrane-spanning segment. Over 409 to 426 (RYEPSREMKSQWTAVWVK) the chain is Lumenal. A helical membrane pass occupies residues 427–447 (ISSSWIGIVLYVWTLVAPLVL). The Cytoplasmic portion of the chain corresponds to 448-453 (TNRDFD).

The protein belongs to the TDE1 family. Interacts with SPTLC1.

It is found in the endoplasmic reticulum membrane. In terms of biological role, enhances the incorporation of serine into phosphatidylserine and sphingolipids. In Bos taurus (Bovine), this protein is Serine incorporator 1 (SERINC1).